We begin with the raw amino-acid sequence, 284 residues long: tRNA pseudouridine synthase B (284 aa).

Asp-40 (nucleophile) is an active-site residue.

It belongs to the pseudouridine synthase TruB family. Type 1 subfamily.

It carries out the reaction uridine(55) in tRNA = pseudouridine(55) in tRNA. Functionally, responsible for synthesis of pseudouridine from uracil-55 in the psi GC loop of transfer RNAs. The chain is tRNA pseudouridine synthase B from Helicobacter hepaticus (strain ATCC 51449 / 3B1).